We begin with the raw amino-acid sequence, 243 residues long: UPF0173 metal-dependent hydrolase Caur_2542 (243 aa).

Belongs to the UPF0173 family.

In Chloroflexus aurantiacus (strain ATCC 29366 / DSM 635 / J-10-fl), this protein is UPF0173 metal-dependent hydrolase Caur_2542.